Reading from the N-terminus, the 370-residue chain is Nodulation protein Z (370 aa).

Positions 47–361 (SSNDRFVVSR…NDPGRLILIE (315 aa)) constitute a GT23 domain.

Belongs to the glycosyltransferase 23 family.

Functionally, fucosyltransferase which adds the fucose moiety of the nod factor on its terminal reducing N-acetylglucosamine end. Uses GDP-fucose as the donor group. In Bradyrhizobium diazoefficiens (strain JCM 10833 / BCRC 13528 / IAM 13628 / NBRC 14792 / USDA 110), this protein is Nodulation protein Z (nodZ).